A 417-amino-acid polypeptide reads, in one-letter code: Multifunctional CCA protein (417 aa).

Positions 8 and 11 each coordinate ATP. CTP-binding residues include Gly8 and Arg11. Asp21 and Asp23 together coordinate Mg(2+). Positions 91, 137, and 140 each coordinate ATP. Positions 91, 137, and 140 each coordinate CTP. The HD domain occupies 225-326; the sequence is SGIHTLMTLQ…LNVLKKTDAF (102 aa).

Belongs to the tRNA nucleotidyltransferase/poly(A) polymerase family. Bacterial CCA-adding enzyme type 1 subfamily. As to quaternary structure, monomer. Can also form homodimers and oligomers. Requires Mg(2+) as cofactor. Ni(2+) is required as a cofactor.

The enzyme catalyses a tRNA precursor + 2 CTP + ATP = a tRNA with a 3' CCA end + 3 diphosphate. It catalyses the reaction a tRNA with a 3' CCA end + 2 CTP + ATP = a tRNA with a 3' CCACCA end + 3 diphosphate. Functionally, catalyzes the addition and repair of the essential 3'-terminal CCA sequence in tRNAs without using a nucleic acid template. Adds these three nucleotides in the order of C, C, and A to the tRNA nucleotide-73, using CTP and ATP as substrates and producing inorganic pyrophosphate. tRNA 3'-terminal CCA addition is required both for tRNA processing and repair. Also involved in tRNA surveillance by mediating tandem CCA addition to generate a CCACCA at the 3' terminus of unstable tRNAs. While stable tRNAs receive only 3'-terminal CCA, unstable tRNAs are marked with CCACCA and rapidly degraded. In Neisseria meningitidis serogroup C (strain 053442), this protein is Multifunctional CCA protein.